Consider the following 614-residue polypeptide: MSIPSDAKQLYAEFLQQEVNQSTSAHQEKLVMVLNRALFALKNYPDPIYHPKDLLKVKGIGQTTMNKLSKRLKTYCEENGYSFPEESSSTDNTQSTQNDSNPSNTQKTRVRTLEPEENESQGTRKRRKKKYIPRNRSGGYGILLGLLELGCDKDGTACTRRQLIAVASKYCDQSYEKNPSTKEFYSAWSAIKSLKTNDLVIEQGRPSQFSLTEAGTILADSLKTANNIEFDVSSVYERRLNRGNTQNSFTNDEHDHTVNFSGLMNHANMSINESANSSRLFLDATANSSRIEQNEEPEVSAEISTPIPKQKVSKGRWKGVKYELWKPDSYDIILHIDHREVRSKEDRGFFARKLLQRGIETESSSLTVGDMIWLAKHKQSGQQCALDFIVERKRLDDLVISIRDNRFSEQKNRLQKTGCKHIFYLVEETTGYNVSDSADMMKTSIWTTVIYNDFHIKRTRNADTTVQWLTDMSLIIKELYSRKSLVVINHDHITNQSIYLTSLKMFRTEFERNKEIECCHNYESMQSAMVKTNLMTVKELYLRALMSVKGISLEKALMIQSRYPTFKTLLKAYRRCAAEADAKTLIQNELKDAPGNRKIGKSLSHTLWETFGKL.

The interval Gly80–Ile132 is disordered. Over residues Ser87–Asn101 the composition is skewed to low complexity. Residues Thr123–Ile132 are compositionally biased toward basic residues. The region spanning Ile333–Thr430 is the ERCC4 domain.

The protein belongs to the XPF family. As to quaternary structure, interacts with EME1. It depends on Mg(2+) as a cofactor.

The protein localises to the nucleus. Its function is as follows. Interacts with EME1 to form a DNA structure-specific endonuclease with substrate preference for branched DNA structures with a 5'-end at the branch nick. Typical substrates include 3'-flap structures, D-loops, replication forks and nicked Holliday junctions. May be required in mitosis for the processing of stalled or collapsed replication fork intermediates. May be required in meiosis for the repair of meiosis-specific double strand breaks subsequent to single-end invasion (SEI). The protein is Crossover junction endonuclease MUS81 (MUS81) of Kluyveromyces lactis (strain ATCC 8585 / CBS 2359 / DSM 70799 / NBRC 1267 / NRRL Y-1140 / WM37) (Yeast).